Here is a 61-residue protein sequence, read N- to C-terminus: MWIYRSQKSKNPDNLLQLLRVRKDYRGPLKPYSQQFSYAGSIVICPEKFKTSFCARSFCAL.

Controls the copy number in gene replication. In Escherichia coli, this protein is Protein CopA/IncA (copA).